We begin with the raw amino-acid sequence, 98 residues long: Bombyxin A-3 homolog (98 aa).

The N-terminal stretch at 1-18 is a signal peptide; it reads MRTQVLFLVLEVAAMASG. 3 disulfides stabilise this stretch: Cys26–Cys85, Cys38–Cys98, and Cys84–Cys89. Positions 47–75 are cleaved as a propeptide — c peptide like; that stretch reads TPYTSSESEGYGWRWLAPQRARQLAGARG.

This sequence belongs to the insulin family. Heterodimer of a B chain and an A chain linked by two disulfide bonds.

It is found in the secreted. Its function is as follows. Brain peptide responsible for activation of prothoracic glands to produce ecdysone in insects. The chain is Bombyxin A-3 homolog (SBXA3) from Samia cynthia (Ailanthus silkmoth).